We begin with the raw amino-acid sequence, 380 residues long: Cytochrome b (380 aa).

The next 4 membrane-spanning stretches (helical) occupy residues 34-54 (FGSL…FLAM), 78-99 (WLLR…YFHI), 114-134 (WNIG…GYVL), and 179-199 (FFTF…IHLL). H84 and H98 together coordinate heme b. 2 residues coordinate heme b: H183 and H197. H202 is a binding site for a ubiquinone. 4 helical membrane-spanning segments follow: residues 227–247 (YKDL…STFA), 289–309 (LGGV…PIIH), 321–341 (IAKT…WIGG), and 348–368 (FITI…LLIP).

It belongs to the cytochrome b family. The cytochrome bc1 complex contains 3 respiratory subunits (MT-CYB, CYC1 and UQCRFS1), 2 core proteins (UQCRC1 and UQCRC2) and probably 6 low-molecular weight proteins. Heme b is required as a cofactor.

The protein localises to the mitochondrion inner membrane. Functionally, component of the ubiquinol-cytochrome c reductase complex (complex III or cytochrome b-c1 complex) that is part of the mitochondrial respiratory chain. The b-c1 complex mediates electron transfer from ubiquinol to cytochrome c. Contributes to the generation of a proton gradient across the mitochondrial membrane that is then used for ATP synthesis. This chain is Cytochrome b (mt-cyb), found in Pelophylax nigromaculatus (Black-spotted frog).